Consider the following 612-residue polypeptide: MNHFPKLLSSQIGFDLAQTMLEGFDRHYRIFRDAAIHAKTLFEKGDWHGLQKLARDRITSYDERVDECVELLEDEYDAEKIDSEVWQQIKLHYIGLLTTHRQPECAETFFNSVCCKILHRSYFNNDFIFVRPAISTEYIENDEPAAKPTYRAYYPGKDGLAATLERIVTNFQLEPQFEDLTRDVGCVMQAIHDAFGAFDEAPNFQIHVLSSLFYRNKSAYIVGRIINGDLLLPFAVPLRHVKPGVLALDTVLLKREQLLIIFSFSHSYFLVDMEVPSAYVEFLGTIMPGKPKAEIYTSVGLQKQGKNLFYRDLLHHLSHSSDQFIIAPGIKGLVMLVFTLPSFPYVFKLIKDNFPPPKETTRAQIQSKYQLVKRHDRLGRMADTLEYSSVALPRSRLDDALVRELEKEVPSLLEYEGENLVIRHMYIERRMVPLNLFLQNGNDEDVEHGIKEYGNAVKELMQANIFPGDMLYKNFGVTRHGRVVFYDYDEIEYLTDCNVRAVPAPRNEEDEMSGEPWYSVGPHDIFPETYGTFLLGDPRVRRSFMQHHADFFDPALWQRHKDHLLKGELPDFFPYDDSARFCNCYPERFADAAGRASPEPDAPADARSVRVA.

Residues 327-333 (APGIKGL) and Lys-348 each bind ATP. The active site involves Asp-383. The segment at 593 to 612 (AGRASPEPDAPADARSVRVA) is disordered.

This sequence belongs to the AceK family.

It localises to the cytoplasm. It catalyses the reaction L-seryl-[isocitrate dehydrogenase] + ATP = O-phospho-L-seryl-[isocitrate dehydrogenase] + ADP + H(+). Its function is as follows. Bifunctional enzyme which can phosphorylate or dephosphorylate isocitrate dehydrogenase (IDH) on a specific serine residue. This is a regulatory mechanism which enables bacteria to bypass the Krebs cycle via the glyoxylate shunt in response to the source of carbon. When bacteria are grown on glucose, IDH is fully active and unphosphorylated, but when grown on acetate or ethanol, the activity of IDH declines drastically concomitant with its phosphorylation. In Paraburkholderia phytofirmans (strain DSM 17436 / LMG 22146 / PsJN) (Burkholderia phytofirmans), this protein is Isocitrate dehydrogenase kinase/phosphatase.